A 314-amino-acid chain; its full sequence is Ribosomal RNA small subunit methyltransferase H (314 aa).

Residues 31-33 (GGY), Asp-49, Phe-76, Asp-118, and Gln-125 each bind S-adenosyl-L-methionine.

This sequence belongs to the methyltransferase superfamily. RsmH family.

It is found in the cytoplasm. It carries out the reaction cytidine(1402) in 16S rRNA + S-adenosyl-L-methionine = N(4)-methylcytidine(1402) in 16S rRNA + S-adenosyl-L-homocysteine + H(+). Its function is as follows. Specifically methylates the N4 position of cytidine in position 1402 (C1402) of 16S rRNA. The chain is Ribosomal RNA small subunit methyltransferase H from Wolbachia pipientis wMel.